The chain runs to 122 residues: Large ribosomal subunit protein uL14c (122 aa).

It belongs to the universal ribosomal protein uL14 family. Part of the 50S ribosomal subunit.

It localises to the plastid. It is found in the chloroplast. Binds to 23S rRNA. In Amborella trichopoda, this protein is Large ribosomal subunit protein uL14c.